Consider the following 90-residue polypeptide: MSRVVVSVIGQDRTGIVAGISKVLAENNANILDISQTIMDNLFAMIMLVDISNAKVDFATLKKELEKAGEELGVQVIVQHEDIFKYMHRI.

Residues 5–79 (VVSVIGQDRT…EELGVQVIVQ (75 aa)) enclose the ACT domain.

This sequence belongs to the UPF0237 family.

The protein is UPF0237 protein MJ1558 of Methanocaldococcus jannaschii (strain ATCC 43067 / DSM 2661 / JAL-1 / JCM 10045 / NBRC 100440) (Methanococcus jannaschii).